The primary structure comprises 169 residues: Ribosome maturation factor RimP (169 aa).

The protein belongs to the RimP family.

The protein resides in the cytoplasm. Functionally, required for maturation of 30S ribosomal subunits. In Pseudomonas putida (strain ATCC 700007 / DSM 6899 / JCM 31910 / BCRC 17059 / LMG 24140 / F1), this protein is Ribosome maturation factor RimP.